We begin with the raw amino-acid sequence, 205 residues long: GTP cyclohydrolase 1 (205 aa).

Zn(2+)-binding residues include C94, H97, and C165.

Belongs to the GTP cyclohydrolase I family. As to quaternary structure, homomer.

It catalyses the reaction GTP + H2O = 7,8-dihydroneopterin 3'-triphosphate + formate + H(+). Its pathway is cofactor biosynthesis; 7,8-dihydroneopterin triphosphate biosynthesis; 7,8-dihydroneopterin triphosphate from GTP: step 1/1. This is GTP cyclohydrolase 1 from Sinorhizobium fredii (strain NBRC 101917 / NGR234).